The following is a 719-amino-acid chain: Polyribonucleotide nucleotidyltransferase (719 aa).

The Mg(2+) site is built by aspartate 507 and aspartate 513. The KH domain occupies 573–633 (PKLELFSVDP…EQIKAAKDYI (61 aa)). In terms of domain architecture, S1 motif spans 658–719 (GQEFQGIVKK…NGKISVDLCE (62 aa)).

The protein belongs to the polyribonucleotide nucleotidyltransferase family. Requires Mg(2+) as cofactor.

The protein resides in the cytoplasm. The catalysed reaction is RNA(n+1) + phosphate = RNA(n) + a ribonucleoside 5'-diphosphate. Its function is as follows. Involved in mRNA degradation. Catalyzes the phosphorolysis of single-stranded polyribonucleotides processively in the 3'- to 5'-direction. This chain is Polyribonucleotide nucleotidyltransferase, found in Campylobacter jejuni subsp. jejuni serotype O:2 (strain ATCC 700819 / NCTC 11168).